The primary structure comprises 267 residues: AMP/ADP-polyphosphate phosphotransferase (267 aa).

It belongs to the polyphosphate kinase 2 (PPK2) family. Class III subfamily. The cofactor is Mn(2+).

It carries out the reaction [phosphate](n) + ADP = [phosphate](n+1) + AMP. It catalyses the reaction [phosphate](n) + ATP = [phosphate](n+1) + ADP. Uses inorganic polyphosphate (polyP) as a donor to convert both AMP to ADP and ADP to ATP. Can also use GMP, CMP, UMP, GDP, CDP and UDP. This chain is AMP/ADP-polyphosphate phosphotransferase, found in Meiothermus ruber (strain ATCC 35948 / DSM 1279 / VKM B-1258 / 21) (Thermus ruber).